Consider the following 610-residue polypeptide: Solute carrier family 23 member 3 (610 aa).

Over residues 1 to 16 (MSRSPLNPSQLRSVGS) the composition is skewed to polar residues. The disordered stretch occupies residues 1 to 32 (MSRSPLNPSQLRSVGSQDALAPLPPPAPQNPS). Residues 1–49 (MSRSPLNPSQLRSVGSQDALAPLPPPAPQNPSTHSWDPLCGSLPWGLSC) are Cytoplasmic-facing. A helical membrane pass occupies residues 50–70 (LLALQHVLVMASLLCVSHLLL). The Extracellular portion of the chain corresponds to 71-85 (LCSLSPGGLSYSPSQ). The helical transmembrane segment at 86 to 106 (LLASSFFSCGMSTILQTWMGS) threads the bilayer. The Cytoplasmic segment spans residues 107–164 (RLPLVQAPSLEFLIPALVLTSQKLPRAIQTPGNSSLMLHLCRGPSCHGLGHWNTSLQE). Residues 165–185 (VSGAVVVSGLLQGMMGLLGSP) traverse the membrane as a helical segment. The Extracellular segment spans residues 186-187 (GH). The chain crosses the membrane as a helical span at residues 188–208 (VFPHCGPLVLAPSLVVAGLSA). The Cytoplasmic segment spans residues 209–211 (HRE). Residues 212-232 (VAQFCFTHWGLALLVILLMVV) form a helical membrane-spanning segment. Topologically, residues 233-266 (CSQHLGSCQFHVCPWRRASTSSTHTPLPVFRLLS) are extracellular. A helical membrane pass occupies residues 267 to 287 (VLIPVACVWIVSAFVGFSVIP). Topologically, residues 288 to 316 (QELSAPTKAPWIWLPHPGEWNWPLLTPRA) are cytoplasmic. A helical transmembrane segment spans residues 317–337 (LAAGISMALAASTSSLGCYAL). Topologically, residues 338–355 (CGRLLHLPPPPPHACSRG) are extracellular. A helical transmembrane segment spans residues 356 to 376 (LSLEGLGSVLAGLLGSPMGTA). Over 377-394 (SSFPNVGKVGLIQAGSQQ) the chain is Cytoplasmic. Residues 395–414 (VAHLVGLLCVGLGLSPRLAQ) form a helical membrane-spanning segment. Residues 415-423 (LLTTIPLPV) are Extracellular-facing. The helical transmembrane segment at 424–446 (VGGVLGVTQAVVLSAGFSSFYLA) threads the bilayer. Topologically, residues 447 to 452 (DIDSGR) are cytoplasmic. Residues 453-472 (NIFIVGFSIFMALLLPRWFR) traverse the membrane as a helical segment. Residues 473 to 486 (EAPVLFSTGWSPLD) lie on the Extracellular side of the membrane. Residues 487–507 (VLLHSLLTQPIFLAGLSGFLL) form a helical membrane-spanning segment. Residues 508–610 (ENTIPGTQLE…SSREGFRSQK (103 aa)) are Cytoplasmic-facing. Residues 571–610 (PEDPGDEEGGSSEPEEMADLLPGSGEPCPESSREGFRSQK) form a disordered region. Over residues 573-588 (DPGDEEGGSSEPEEMA) the composition is skewed to acidic residues. A compositionally biased stretch (basic and acidic residues) spans 601 to 610 (SSREGFRSQK).

Belongs to the nucleobase:cation symporter-2 (NCS2) (TC 2.A.40) family.

It is found in the membrane. It carries out the reaction hypoxanthine(out) + Na(+)(out) = hypoxanthine(in) + Na(+)(in). Functionally, acts as a sodium-dependent hypoxanthine transporter. May show xanthine-hypoxanthine exchange activity. This Homo sapiens (Human) protein is Solute carrier family 23 member 3 (SLC23A3).